The sequence spans 201 residues: Translation initiation factor IF-3 (201 aa).

The protein belongs to the IF-3 family. As to quaternary structure, monomer.

Its subcellular location is the cytoplasm. Functionally, IF-3 binds to the 30S ribosomal subunit and shifts the equilibrium between 70S ribosomes and their 50S and 30S subunits in favor of the free subunits, thus enhancing the availability of 30S subunits on which protein synthesis initiation begins. This chain is Translation initiation factor IF-3, found in Prochlorococcus marinus (strain SARG / CCMP1375 / SS120).